Here is a 320-residue protein sequence, read N- to C-terminus: Protein MRG1 (320 aa).

The disordered stretch occupies residues M1–L28. The segment covering D12–N24 has biased composition (polar residues). Residues S30 to L80 enclose the Tudor-knot domain. Residues A93–T104 show a composition bias toward basic and acidic residues. A disordered region spans residues A93–N147. Residues S106 to R115 show a composition bias toward polar residues. Residues S116–K128 show a composition bias toward basic and acidic residues. An MRG domain is found at A150–K318.

Interacts with HAM1 and HAM2. Interacts (via MRG domain) with CO. Component of the NuA4 histone acetyltransferase complex. As to expression, ubiquitous. Mainly expressed in the vasculature of cotyledons and leaves, and in roots and inflorescences.

It localises to the nucleus. Chromatin remodeling factor. Acts as a 'reader' protein by binding to H3K36me3 and H3K36me3 to control histone H4 acetylation. Increases the transcriptional levels of the flowering time genes FLC and FT. Binds the chromatin at the FT promoter upon interaction with CO. The sequence is that of Protein MRG1 from Arabidopsis thaliana (Mouse-ear cress).